The sequence spans 420 residues: Exodeoxyribonuclease 7 large subunit (420 aa).

It belongs to the XseA family. In terms of assembly, heterooligomer composed of large and small subunits.

It is found in the cytoplasm. The enzyme catalyses Exonucleolytic cleavage in either 5'- to 3'- or 3'- to 5'-direction to yield nucleoside 5'-phosphates.. In terms of biological role, bidirectionally degrades single-stranded DNA into large acid-insoluble oligonucleotides, which are then degraded further into small acid-soluble oligonucleotides. The chain is Exodeoxyribonuclease 7 large subunit from Helicobacter pylori (strain P12).